We begin with the raw amino-acid sequence, 248 residues long: MALLEICCYSMECALTAQQNGADRVELCAAPKEGGLTPSLGVLKSVRQRVTIPVHPIIRPRGGDFCYSDGEFAAILEDVRTVRELGFPGLVTGVLEVDGNVDMPRMEKIMAAAGPLAVTFHRAFDMCANPLNTLNNLAELGITRVLTSGQKSDALQGLSKIMELIAHRDAPIIMAGAGVRAENLHHFLDAGVLEVHSSAGAWQASPMRYRNQGLSMSSDAHADEYSRYVVDGAAVAEMKGIIECHQAK.

It belongs to the CutC family. As to quaternary structure, homodimer.

It localises to the cytoplasm. The chain is PF03932 family protein CutC from Escherichia coli O81 (strain ED1a).